The following is a 131-amino-acid chain: Small ribosomal subunit protein uS9 (131 aa).

Belongs to the universal ribosomal protein uS9 family.

This chain is Small ribosomal subunit protein uS9, found in Mesoplasma florum (strain ATCC 33453 / NBRC 100688 / NCTC 11704 / L1) (Acholeplasma florum).